We begin with the raw amino-acid sequence, 147 residues long: Lysozyme C-3 (147 aa).

The N-terminal stretch at M1–G18 is a signal peptide. One can recognise a C-type lysozyme domain in the interval K19–L147. 4 disulfides stabilise this stretch: C24-C145, C48-C133, C83-C99, and C95-C113. Active-site residues include E53 and D71.

Belongs to the glycosyl hydrolase 22 family. Monomer. Expressed in stomach.

Its subcellular location is the secreted. The catalysed reaction is Hydrolysis of (1-&gt;4)-beta-linkages between N-acetylmuramic acid and N-acetyl-D-glucosamine residues in a peptidoglycan and between N-acetyl-D-glucosamine residues in chitodextrins.. In terms of biological role, lysozymes have primarily a bacteriolytic function; those in tissues and body fluids are associated with the monocyte-macrophage system and enhance the activity of immunoagents. The polypeptide is Lysozyme C-3 (Ovis aries (Sheep)).